Reading from the N-terminus, the 1947-residue chain is COPII coat assembly protein sec16 (1947 aa).

Disordered stretches follow at residues 1–57 (MENS…VPDA), 347–385 (RVFEGDEDEDDGFFSSAQQPATENEPQEPVHIQRKSTSQ), 465–956 (DDLL…QPSS), 1462–1760 (SDAA…LGEE), and 1773–1904 (VNKK…RKKG). The segment covering 361–370 (SSAQQPATEN) has biased composition (polar residues). Over residues 465-474 (DDLLLEDEPS) the composition is skewed to acidic residues. 2 stretches are compositionally biased toward polar residues: residues 515–527 (SVYTPHQPSTADL) and 538–550 (PLSSSAPYSTSYF). The segment covering 565-574 (SFAERPKEGY) has biased composition (basic and acidic residues). Pro residues predominate over residues 603–619 (PAPPPRSSSFTAPPPPQ). Over residues 696 to 711 (PYAQLSGDTPQSQLQQ) the composition is skewed to polar residues. Pro residues predominate over residues 741–766 (PKPPTLQPGVKPPASPRYSPAPPPPA). Composition is skewed to polar residues over residues 774–798 (RYTSQPSVIPGQTVTLPFQPRTSSP), 823–833 (SPVTGQPSHTE), and 840–864 (PRSSQVQASGPSAVDTSSSYQQTSP). A compositionally biased stretch (pro residues) spans 893-904 (YTPPPETPPFVP). Residues 905-918 (PRRSQTQSPTQQQS) show a composition bias toward low complexity. 2 stretches are compositionally biased toward polar residues: residues 938–956 (APSSPTKTSHTYAPMQPSS) and 1483–1495 (ISGTPTVSRSPSV). Residues 1519–1530 (QPNNQNAPNSSP) are compositionally biased toward low complexity. Polar residues-rich tracts occupy residues 1538–1547 (SLDSQRSASF), 1580–1591 (AGYQSTPPQTSY), and 1604–1613 (QAYTPPTATP). Residues 1694–1727 (IAARAEALKKAEKARKDREADEAFRKAAEADAKK) show a composition bias toward basic and acidic residues. Residues 1854 to 1867 (PPAGNASSRPGSSA) are compositionally biased toward low complexity.

Belongs to the SEC16 family.

The protein resides in the endoplasmic reticulum membrane. Involved in the initiation of assembly of the COPII coat required for the formation of transport vesicles from the endoplasmic reticulum (ER) and the selection of cargo molecules. Also involved in autophagy. The protein is COPII coat assembly protein sec16 (sec16) of Emericella nidulans (strain FGSC A4 / ATCC 38163 / CBS 112.46 / NRRL 194 / M139) (Aspergillus nidulans).